The primary structure comprises 285 residues: 2-hydroxy-6-oxononadienedioate/2-hydroxy-6-oxononatrienedioate hydrolase 1 (285 aa).

The active-site Proton acceptor is the His-265.

The protein belongs to the AB hydrolase superfamily. MhpC family. In terms of assembly, homodimer.

It catalyses the reaction (2Z,4E)-2-hydroxy-6-oxonona-2,4-dienedioate + H2O = (2Z)-2-hydroxypenta-2,4-dienoate + succinate + H(+). The catalysed reaction is (2Z,4E,7E)-2-hydroxy-6-oxonona-2,4,7-trienedioate + H2O = (2Z)-2-hydroxypenta-2,4-dienoate + fumarate + H(+). It participates in aromatic compound metabolism; 3-phenylpropanoate degradation. Its function is as follows. Catalyzes the cleavage of the C5-C6 bond of 2-hydroxy-6-oxononadienedioate and 2-hydroxy-6-oxononatrienedioate, a dienol ring fission product of the bacterial meta-cleavage pathway for degradation of phenylpropionic acid. The chain is 2-hydroxy-6-oxononadienedioate/2-hydroxy-6-oxononatrienedioate hydrolase 1 from Pseudomonas putida (Arthrobacter siderocapsulatus).